The chain runs to 261 residues: Pyrroline-5-carboxylate reductase (261 aa).

It belongs to the pyrroline-5-carboxylate reductase family.

Its subcellular location is the cytoplasm. The catalysed reaction is L-proline + NADP(+) = (S)-1-pyrroline-5-carboxylate + NADPH + 2 H(+). The enzyme catalyses L-proline + NAD(+) = (S)-1-pyrroline-5-carboxylate + NADH + 2 H(+). It participates in amino-acid biosynthesis; L-proline biosynthesis; L-proline from L-glutamate 5-semialdehyde: step 1/1. In terms of biological role, catalyzes the reduction of 1-pyrroline-5-carboxylate (PCA) to L-proline. The chain is Pyrroline-5-carboxylate reductase from Thermus thermophilus (strain ATCC BAA-163 / DSM 7039 / HB27).